Here is a 62-residue protein sequence, read N- to C-terminus: Metallothionein-4 (62 aa).

A divalent metal cation contacts are provided by cysteine 6, cysteine 8, cysteine 14, cysteine 16, cysteine 20, cysteine 22, cysteine 25, cysteine 27, cysteine 30, cysteine 34, cysteine 35, cysteine 37, cysteine 38, cysteine 42, cysteine 45, cysteine 49, cysteine 51, cysteine 58, cysteine 60, and cysteine 61.

This sequence belongs to the metallothionein superfamily. Type 1 family. As to expression, expressed exclusively in stratified squamous epithelia associated with oral epithelia, esophagus, upper stomach, tail, footpads and neonatal skin.

Seems to bind zinc and copper. Could play a special role in regulating zinc metabolism during the differentiation of stratified epithelia. This chain is Metallothionein-4 (Mt4), found in Mus musculus (Mouse).